The primary structure comprises 278 residues: 3-methyl-2-oxobutanoate hydroxymethyltransferase (278 aa).

Mg(2+) contacts are provided by aspartate 43 and aspartate 82. 3-methyl-2-oxobutanoate contacts are provided by residues 43 to 44 (DS), aspartate 82, and lysine 112. Glutamate 114 serves as a coordination point for Mg(2+). The active-site Proton acceptor is the glutamate 181.

Belongs to the PanB family. In terms of assembly, homodecamer; pentamer of dimers. Mg(2+) is required as a cofactor.

The protein localises to the cytoplasm. It carries out the reaction 3-methyl-2-oxobutanoate + (6R)-5,10-methylene-5,6,7,8-tetrahydrofolate + H2O = 2-dehydropantoate + (6S)-5,6,7,8-tetrahydrofolate. It participates in cofactor biosynthesis; (R)-pantothenate biosynthesis; (R)-pantoate from 3-methyl-2-oxobutanoate: step 1/2. Functionally, catalyzes the reversible reaction in which hydroxymethyl group from 5,10-methylenetetrahydrofolate is transferred onto alpha-ketoisovalerate to form ketopantoate. In Bacillus cereus (strain ATCC 14579 / DSM 31 / CCUG 7414 / JCM 2152 / NBRC 15305 / NCIMB 9373 / NCTC 2599 / NRRL B-3711), this protein is 3-methyl-2-oxobutanoate hydroxymethyltransferase.